The sequence spans 1847 residues: MVIIMEKPWVEKYRPKTLDDIVGQDEIVKRLKKYVEKKSMPHLLFSGPPGVGKCLTGDTKVIVNGEIREIGEVIEEISNGKFGVTLTNNLKVLGIDEDGKIREFDVQYVYKDKTNTLIKIKTKMGRELKVTTYHPLLINHKNGEIKWEKAENLKVGDKLATPRYILFNESDYNEELAEWLGYFIGDGHADKESNKITFTNGDEKLRKRFAELTEKLFKDAKIKERIHKDRTPDIYVNSKEAVEFIDKLGLRGKKADKVRIPKEIMRSDALRAFLRAYFDCDGGIEKHSIVLSTASKEMAEDLVYALLRFGIIAKLREKVNKNNNKVYYHIVISNSSNLRTFLDNIGFSQERKLKKLLEIIKDENPNLDVITIDKEKIRYIRDRLKVKLTRDIEKDNWSYNKCRKITQELLKEIYYRLEELKEIEKALEENILIDWDEVAERRKEIAEKTGIRSDRILEYIRGKRKPSLKNYIKIANTLGKNIEKIIDAMRIFAKKYSSYAEIGKMLNMWNSSIKIYLESNTQEIEKLEEIRKTELKLVKEILNDEKLIDSIGYVLFLASNEIYWDEIVEIEQLNGEFTIYDLHVPRYHNFIGGNLPTILHNTTAALCLARDLFGENWRDNFLELNASVSKDTPILVKIDGKVKRTTFEELDKIYFETNDENEMYKKVDNLEVLTVDENFRVRWRKVSTIIRHKVDKILRIKFEGGYIELTGNHSIMMLDENGLVAKKASDIKVGDCFLSFVANIEGEKDRLDLKEFEPKDITSRVKIINDFDIDEDTAWMLGLYVAEGAVGFKGKTSGQVIYTLGSHEHDLINKLNDIVDKKGFSKYENFTGSGFDRKRLSAKQIRILNTQLARFVEENFYDGNGRRARNKRIPDIIFELKENLRVEFLKGLADGDSSGNWREVVRISSKSDNLLIDTVWLARISGIESSIFENEARLIWKGGMKWKKSNLLPAEPIIKMIKKLENKINGNWRYILRHQLYEGKKRVSKDKIKQILEMVNVEKLSDKEKEVYDLLKKLSKTELYALVVKEIEIIDYNDFVYDVSVPNNEMFFAGNVPILLHNSDERGIDVIRTKVKDFARTKPIGDVPFKIIFLDESDALTADAQNALRRTMEKYSDVCRFILSCLTGDAKITLPDEREIKIEDFIKMFEERKLKHVLNRNGEDLVLAGVKFNSKIVNHKVYRLVLESGREIEATGDHKFLTRDGWKEVYELKEDDEVLVYPALEGVGFEVDERRIIGLNEFYEFLTNYEIKLGYKPLGKAKSYKELITRDKEKILSRVLELSDKYSKSEIRRKIEEEFGIKISLTTIKNLINGKIDGFALKYVRKIKELGWDEITYDDEKAGIFARLLGFIIGDGHLSKSKEGRILITATINELEGIKKDLEKLGIKASNIIEKDIEHKLDGREIKGKTSFIYINNKAFYLLLNFWGVEIGNKTINGYNIPKWIKYGNKFVKREFLRGLFGADGTKPYIKKYNINGIKLGIRVENISKDKTLEFFEEVKKMLEEFEVESYIKVSKIDNKNLTELIVKANNKNYLKYLSRISYAYEKDNFARLVGEYLRIKEAYKDIILKEIAENALKEADGEKSLRELARKYNVPVDFIINQLKGKDIGLPRNFMTFEEFLKEKVVDGKYVSERIIKKECIGYRDVYDITCHKDPSFIANGFVSHNCNYPSKIIPPIQSRCAVFRFSPLKKEDIAKKLKEIAEKEGLNLTESGLEAIIYVSEGDMRKAINVLQTAAALSDVIDDEIVYKVSSRARPEEVKKMMELALDGKFMEARDLLYKLMVEWGMSGEDILNQMFREINSLDIDERKKVELADAIGETDFRIVEGANERIQLSALLAKMALMGR.

DOD-type homing endonuclease domains lie at 179–311, 780–927, and 1348–1508; these read WLGY…RFGI, MLGL…ISGI, and LLGF…EFEV.

Belongs to the activator 1 small subunits family. RfcS subfamily. As to quaternary structure, heteromultimer composed of small subunits (RfcS) and large subunits (RfcL). This protein undergoes a protein self splicing that involves a post-translational excision of the intervening region (intein) followed by peptide ligation.

Part of the RFC clamp loader complex which loads the PCNA sliding clamp onto DNA. The chain is Replication factor C small subunit (rfcS) from Methanocaldococcus jannaschii (strain ATCC 43067 / DSM 2661 / JAL-1 / JCM 10045 / NBRC 100440) (Methanococcus jannaschii).